The chain runs to 210 residues: ATP-dependent dethiobiotin synthetase BioD (210 aa).

Residue 13–18 (GIGKTV) coordinates ATP. Residue threonine 17 coordinates Mg(2+). Residue lysine 33 is part of the active site. Mg(2+) is bound at residue glutamate 101. ATP contacts are provided by residues 101–104 (EGAG) and 185–187 (PWL).

The protein belongs to the dethiobiotin synthetase family. In terms of assembly, homodimer. Requires Mg(2+) as cofactor.

The protein resides in the cytoplasm. The catalysed reaction is (7R,8S)-7,8-diammoniononanoate + CO2 + ATP = (4R,5S)-dethiobiotin + ADP + phosphate + 3 H(+). It participates in cofactor biosynthesis; biotin biosynthesis; biotin from 7,8-diaminononanoate: step 1/2. Catalyzes a mechanistically unusual reaction, the ATP-dependent insertion of CO2 between the N7 and N8 nitrogen atoms of 7,8-diaminopelargonic acid (DAPA, also called 7,8-diammoniononanoate) to form a ureido ring. The protein is ATP-dependent dethiobiotin synthetase BioD of Bradyrhizobium sp. (strain BTAi1 / ATCC BAA-1182).